We begin with the raw amino-acid sequence, 72 residues long: DNA-directed RNA polymerase subunit omega (72 aa).

This sequence belongs to the RNA polymerase subunit omega family. In terms of assembly, the RNAP catalytic core consists of 2 alpha, 1 beta, 1 beta' and 1 omega subunit. When a sigma factor is associated with the core the holoenzyme is formed, which can initiate transcription.

The enzyme catalyses RNA(n) + a ribonucleoside 5'-triphosphate = RNA(n+1) + diphosphate. Its function is as follows. Promotes RNA polymerase assembly. Latches the N- and C-terminal regions of the beta' subunit thereby facilitating its interaction with the beta and alpha subunits. The protein is DNA-directed RNA polymerase subunit omega of Clostridium botulinum (strain Loch Maree / Type A3).